Here is a 531-residue protein sequence, read N- to C-terminus: MKPGIKISKRYSARNASVITVLLLLIYLIYINKETIQTKYQGSRINHDSGGDSTKDKTHTFTIKEIHFRPLDEKTQSYGSLQVTPEFVNMAKSEFEQNVAVASGDNEDLYDKQLWSASIKSNPWTHQFTLKQGSIKMKRMVNRDPDYVESFLDYAHENPEMARKVHLDWVDESVLAPNVTDKETVISLALMSSNAYVRLPYEGDWRNLSDWNNDLNPDLSVGIGWDSDGVRGHIFSNDDSSVIVIALKGTSAQGLPGSGEDETTDNDKLNDNVLFSCCCARVSYLWKTACDCYVKSYTCDEKCLEQELVRKDRYYQAVLDIYRSVVTAHPNSAIWITGHSLGGALASLLGRTFGAPAVAFEAPGELLATKRLHLPMPPGLPAYQEGVWHIGHTADPIFMGTCNGASSSCSIAGYAMETSCHSGKVCVYDVVTDKGWHVNMLNHRIHTVIDGILTDYDTVAKCKTPDACHDCFNWNYVKGRDVPKKHKSSSSTASSTSAETSTLTVGPSPPEKTTTSCIGRNWIGICTEYGI.

Over 1-11 (MKPGIKISKRY) the chain is Cytoplasmic. Residues 12–31 (SARNASVITVLLLLIYLIYI) traverse the membrane as a helical; Signal-anchor for type II membrane protein segment. Residues 32-531 (NKETIQTKYQ…WIGICTEYGI (500 aa)) lie on the Lumenal side of the membrane. N-linked (GlcNAc...) asparagine glycans are attached at residues N178 and N207. S340 functions as the Charge relay system in the catalytic mechanism. A disordered region spans residues 482 to 513 (VPKKHKSSSSTASSTSAETSTLTVGPSPPEKT). A compositionally biased stretch (low complexity) spans 489–502 (SSSTASSTSAETST).

It belongs to the AB hydrolase superfamily. Lipase family. As to quaternary structure, binds to both phosphatidylinositol (PI) and phosphatidylinositol 3,5-bisphosphate (PIP2).

The protein localises to the endosome. The protein resides in the multivesicular body membrane. Its subcellular location is the prevacuolar compartment membrane. The catalysed reaction is a triacylglycerol + H2O = a diacylglycerol + a fatty acid + H(+). Its function is as follows. Lipase which is essential for lysis of subvacuolar cytoplasm to vacuole targeted bodies and intravacuolar autophagic bodies. Involved in the lysis of intravacuolar multivesicular body (MVB) vesicles. The intravacuolar membrane disintegration by ATG15 is critical to life span extension. The chain is Putative lipase ATG15 (ATG15) from Kluyveromyces lactis (strain ATCC 8585 / CBS 2359 / DSM 70799 / NBRC 1267 / NRRL Y-1140 / WM37) (Yeast).